The primary structure comprises 159 residues: Transmembrane protein 42 (159 aa).

Transmembrane regions (helical) follow at residues 37 to 57 (FWGV…AASA), 59 to 79 (LAFG…VMAS), 100 to 120 (IASV…GYVL), and 124 to 144 (CQEV…TLIH).

Its subcellular location is the membrane. This is Transmembrane protein 42 (TMEM42) from Homo sapiens (Human).